Here is a 319-residue protein sequence, read N- to C-terminus: MTVKPKLNVLLCAPRGFCAGVVRAIDAVEEALRIYGAPVYVRHEIVHNKYVVETLKSKGAVFVEELDEVPDTSQPVIFSAHGVPKSIPVEAATRNIFAIDATCPLVTKVHREAELHHKRGRQVLLVGHAGHPEVVGTIGQLPAGSILLVQTIEDIASLQVEDEHNLSYVTQTTLSVDDTRSMVEALTRRFPDIVGPHREDICYATTNRQEAVKQVAPIVDALIVVGSSNSSNSQRLKEVAERSGCKLARLVLRAEDVEWELFANISSLAITAGASAPEILVEEIMDAFAERFDLHVEEVSTANEGVFFPLPRELRRATV.

Residue cysteine 18 coordinates [4Fe-4S] cluster. Residues histidine 47 and histidine 81 each coordinate (2E)-4-hydroxy-3-methylbut-2-enyl diphosphate. Dimethylallyl diphosphate contacts are provided by histidine 47 and histidine 81. 2 residues coordinate isopentenyl diphosphate: histidine 47 and histidine 81. Residue cysteine 103 participates in [4Fe-4S] cluster binding. Residue histidine 131 coordinates (2E)-4-hydroxy-3-methylbut-2-enyl diphosphate. Histidine 131 provides a ligand contact to dimethylallyl diphosphate. Histidine 131 is an isopentenyl diphosphate binding site. Catalysis depends on glutamate 133, which acts as the Proton donor. Residue threonine 172 participates in (2E)-4-hydroxy-3-methylbut-2-enyl diphosphate binding. Cysteine 202 lines the [4Fe-4S] cluster pocket. (2E)-4-hydroxy-3-methylbut-2-enyl diphosphate-binding residues include serine 230, serine 231, asparagine 232, and serine 275. Serine 230, serine 231, asparagine 232, and serine 275 together coordinate dimethylallyl diphosphate. Isopentenyl diphosphate contacts are provided by serine 230, serine 231, asparagine 232, and serine 275.

The protein belongs to the IspH family. Requires [4Fe-4S] cluster as cofactor.

It catalyses the reaction isopentenyl diphosphate + 2 oxidized [2Fe-2S]-[ferredoxin] + H2O = (2E)-4-hydroxy-3-methylbut-2-enyl diphosphate + 2 reduced [2Fe-2S]-[ferredoxin] + 2 H(+). The enzyme catalyses dimethylallyl diphosphate + 2 oxidized [2Fe-2S]-[ferredoxin] + H2O = (2E)-4-hydroxy-3-methylbut-2-enyl diphosphate + 2 reduced [2Fe-2S]-[ferredoxin] + 2 H(+). The protein operates within isoprenoid biosynthesis; dimethylallyl diphosphate biosynthesis; dimethylallyl diphosphate from (2E)-4-hydroxy-3-methylbutenyl diphosphate: step 1/1. Its pathway is isoprenoid biosynthesis; isopentenyl diphosphate biosynthesis via DXP pathway; isopentenyl diphosphate from 1-deoxy-D-xylulose 5-phosphate: step 6/6. Catalyzes the conversion of 1-hydroxy-2-methyl-2-(E)-butenyl 4-diphosphate (HMBPP) into a mixture of isopentenyl diphosphate (IPP) and dimethylallyl diphosphate (DMAPP). Acts in the terminal step of the DOXP/MEP pathway for isoprenoid precursor biosynthesis. This chain is 4-hydroxy-3-methylbut-2-enyl diphosphate reductase, found in Methylocella silvestris (strain DSM 15510 / CIP 108128 / LMG 27833 / NCIMB 13906 / BL2).